Here is a 275-residue protein sequence, read N- to C-terminus: Putative ankyrin repeat protein L715 (275 aa).

ANK repeat units follow at residues 94 to 123 (NINYGLCQAIENYHLKIVELLIDHGADINY), 124 to 153 (NNGLPLNLAVKNGYYDIIELLIEKKVNTND), 155 to 183 (IFQLLTHCCQNNLPNSLRILLKENISIDP), and 184 to 213 (IYSTMVNLCLDNGYAECASILINHNNSDST). A disordered region spans residues 253-275 (NQDESDVGDDAENDIENDIEDDN). Over residues 255-275 (DESDVGDDAENDIENDIEDDN) the composition is skewed to acidic residues.

The chain is Putative ankyrin repeat protein L715 from Acanthamoeba polyphaga mimivirus (APMV).